We begin with the raw amino-acid sequence, 528 residues long: Cytochrome P450 monooxygenase ppsD (528 aa).

Residues 2–21 form a helical membrane-spanning segment; sequence LVLVSLVLCLTGFCLLQWAL. An N-linked (GlcNAc...) asparagine glycan is attached at N137. C441 lines the heme pocket. N-linked (GlcNAc...) asparagine glycosylation is found at N450 and N463.

This sequence belongs to the cytochrome P450 family. The cofactor is heme.

The protein localises to the membrane. Its function is as follows. Cytochrome P450 monooxygenase; part of the gene cluster that mediates the biosynthesis of 2,4'-dihydroxy-3'-methoxypropiophenone. The first step of the pathway is the conversion of acetate into acetyl-CoA by the acyl-CoA ligase ppsA. Acetyl-CoA is then used as a starter unit by the polyketide synthase ppsB and condensed with 4 malonyl-CoA unit to produce the pentaketide backbone. During polyketide extension, the polykedite chain is probably reduced and dehydrated by the KR and PT domains, respectively. O-methylation seems to be catalyzed by an unknown methyltransferase rather than by the CMeT domain of ppsB. Two hydroxylations and one further decarboxylation step catalyzed by yet unknown enzymes are then required to yield 4'-hydroxy-3'-methoxypropiophenone. PpsC functions as a carrier protein to transport 4'-hydroxy-3'-methoxypropiophenone to a specific cell compartment in which 4'-hydroxy-3'-methoxypropiophenone is hydroxylated to 2,4'-dihydroxy-3'-methoxypropiophenone by a still to be identified enzyme. This chain is Cytochrome P450 monooxygenase ppsD, found in Aspergillus oryzae (strain ATCC 42149 / RIB 40) (Yellow koji mold).